Reading from the N-terminus, the 660-residue chain is MPIQILPARLANQIAAGEVVERPASVVKELVENSIDAGATRIDIDIEKGGSKLIRIRDNGSGIPKDELTLALSRHATSKITSLDDLEAIVSLGFRGEALASISSVSRLTLTSRTVAQEEAWSAYAEGREMNVKLKPAAHPIGTTIDVVDLFFNTPARRKFLRADKTEFTHIDELLKRIALSRLDVTINLRHNGKMVRQYRAAQTKPQIEKRLAAVCGANFLQHALEVELEHGELKFHGWISSPEGARAQGDIQYCYVNGRMMKDKLINHAIRQGYESSLPANQYAAYILFIEINPHDVDVNVHPAKHEVRFHQARLVHDFIYQAIFGALQQGASLPDVVGHIQSEAEEQQLESKESYFPPMKEYVRQPQQTHYPKSEQLRAAVESTPSYPNKAPLDSWIPKGNVGSSSSNSTAPSRSFHTDKPTKKALSNYNELLTTQNREQRESTSQVNEQSHTFRSTQQIERVAPQVTQVSKNGITLGKVLSVVESTFALLQQGKQLQLLNLRYAEFVKIYGQLSSVNVEPLKPQPLLIPLSVGIDESICNNLSNYASLLKSLGIDLKVKNRTNIIVMAVCQPIRQQNLQQLIPNLLRYLEQINPSLEQVIKWLSHQIQHDEVSYTTAQAIQLVMELEQLWGDELNNFYPKLLKDIDITQVIQAFSHE.

Disordered stretches follow at residues 368–426 (PQQT…PTKK) and 439–461 (NREQ…STQQ). Residues 406-417 (SSSSNSTAPSRS) are compositionally biased toward low complexity.

It belongs to the DNA mismatch repair MutL/HexB family.

Functionally, this protein is involved in the repair of mismatches in DNA. It is required for dam-dependent methyl-directed DNA mismatch repair. May act as a 'molecular matchmaker', a protein that promotes the formation of a stable complex between two or more DNA-binding proteins in an ATP-dependent manner without itself being part of a final effector complex. The chain is DNA mismatch repair protein MutL from Aliivibrio fischeri (strain ATCC 700601 / ES114) (Vibrio fischeri).